An 81-amino-acid chain; its full sequence is Large ribosomal subunit protein bL31B (81 aa).

Belongs to the bacterial ribosomal protein bL31 family. Type B subfamily. Part of the 50S ribosomal subunit.

This Borreliella afzelii (strain PKo) (Borrelia afzelii) protein is Large ribosomal subunit protein bL31B.